The sequence spans 314 residues: Elongator complex protein 5 (314 aa).

It belongs to the ELP5 family. In terms of assembly, component of the elongator complex.

It localises to the cytoplasm. Its subcellular location is the nucleus. It functions in the pathway tRNA modification; 5-methoxycarbonylmethyl-2-thiouridine-tRNA biosynthesis. In terms of biological role, component of the elongator complex, a multiprotein complex which is required for multiple tRNA modifications, including mcm5U (5-methoxycarbonylmethyl uridine), mcm5s2U (5-methoxycarbonylmethyl-2-thiouridine), and ncm5U (5-carbamoylmethyl uridine). The elongator complex catalyzes formation of carboxymethyluridine in the wobble base at position 34 in tRNAs. The polypeptide is Elongator complex protein 5 (iki1) (Schizosaccharomyces pombe (strain 972 / ATCC 24843) (Fission yeast)).